The following is a 468-amino-acid chain: Hepatocyte nuclear factor 3-alpha (468 aa).

Residues 169 to 260 (AKPPYSYISL…GNMFENGCYL (92 aa)) constitute a DNA-binding region (fork-head). An essential for DNA binding region spans residues 251–288 (GNMFENGCYLRRQKRFKCEKQPGAGGGSGGGGSKGGPE). Residues 269–396 (EKQPGAGGGS…DPHYSFNHPF (128 aa)) are disordered. A compositionally biased stretch (gly residues) spans 273 to 285 (GAGGGSGGGGSKG). A phosphoserine mark is found at Ser-303 and Ser-327. Low complexity-rich tracts occupy residues 318–328 (GAPAPGPAASP) and 347–365 (SPAS…ALAS).

Binds DNA as a monomer. Interacts with FOXA2. Interacts with NKX2-1. Interacts with HDAC7. Interacts with the histone H3-H4 heterodimer. Associates with nucleosomes containing histone H2A. Interacts with AR. Interacts with NR0B2. Restricted mainly to endoderm-derived tissues (lung, liver, stomach, and small intestine). Expressed in the prostate.

The protein localises to the nucleus. Transcription factor that is involved in embryonic development, establishment of tissue-specific gene expression and regulation of gene expression in differentiated tissues. Is thought to act as a 'pioneer' factor opening the compacted chromatin for other proteins through interactions with nucleosomal core histones and thereby replacing linker histones at target enhancer and/or promoter sites. Binds DNA with the consensus sequence 5'-[AC]A[AT]T[AG]TT[GT][AG][CT]T[CT]-3'. Proposed to play a role in translating the epigenetic signatures into cell type-specific enhancer-driven transcriptional programs. Involved in the development of multiple endoderm-derived organ systems such as the liver, pancreas, lungs and prostate; FOXA1 and FOXA2 seem to have at least in part redundant roles. Plays a role in prostate morphogenesis and epithelial cell differentiation. FOXA1 and FOXA2 are essential for hepatic specification. FOXA1 and FOXA2 are required for morphogenesis and cell differentiation during formation of the lung. FOXA1 and FOXA2 are involved in bile duct formation; they positively regulate the binding of glucocorticoid receptor/NR3C1 to the IL6 promoter. FOXA1 and FOXA2 regulate multiple phases of midbrain dopaminergic neuron development; they regulate expression of NEUROG2 at the beginning of mDA neurogenesis and of NR4A2 and EN1 in immature mDA neurons. Modulates the transcriptional activity of nuclear hormone receptors. Is involved in ESR1-mediated transcription. Inhibits NKX2-1-mediated transcription from the SFTPC promoter in lung epithel independently from DNA-binding. Involved in regulation of apoptosis. Involved in cell cycle regulation. Originally described as a transcription activator for a number of liver genes such as AFP, albumin, tyrosine aminotransferase, PEPCK, etc. Interacts with the cis-acting regulatory regions of these genes. Involved in glucose homeostasis; activates the GCG promoter. The polypeptide is Hepatocyte nuclear factor 3-alpha (Foxa1) (Mus musculus (Mouse)).